The primary structure comprises 272 residues: Cyclase-like protein 2 (272 aa).

The N-terminal stretch at 1 to 17 (MAHLATVVLLLVAAARQ) is a signal peptide.

The protein belongs to the Cyclase 1 superfamily. Highly expressed in leaf sheaths and flag leaves. Expressed in roots, stems, leaf collars, glumes, young panicles and pistils.

The protein localises to the secreted. The protein resides in the extracellular space. Its subcellular location is the extracellular matrix. Its function is as follows. May be involved in response to stresses. This Oryza sativa subsp. japonica (Rice) protein is Cyclase-like protein 2.